Consider the following 913-residue polypeptide: Calcium-activated chloride channel regulator 1 (913 aa).

Positions 1–21 (MGSFKSSVFILVLHLLEGALS) are cleaved as a signal peptide. Residues 46-199 (DETLIQQIKD…DIAGKNVVNH (154 aa)) form a metalloprotease domain region. Residue H156 coordinates Zn(2+). E157 is an active-site residue. H160 and N167 together coordinate Zn(2+). In terms of domain architecture, VWFA spans 306 to 475 (IVCLVLDKSG…NGLIDAFGAL (170 aa)). N-linked (GlcNAc...) asparagine glycosylation is found at N503, N514, N770, N804, N810, N836, and N885.

This sequence belongs to the CLCR family. Post-translationally, glycosylated. The translation product is autoproteolytically cleaved by the metalloprotease domain in the endoplasmic reticulum into a N-terminal and a C-terminal products that remain physically associated with each other. The cleavage is necessary for calcium-activated chloride channel (CaCC) activation activity. As to expression, expressed in mucin-producing cells in the respiratory and intestinal tracts, cutaneous sweat glands, and renal mucous glands (at protein level). Strong overexpression in the airways of horses with recurrent airway obstruction (at protein level).

It is found in the secreted. The protein resides in the extracellular space. In terms of biological role, may be involved in mediating calcium-activated chloride conductance. May play critical roles in goblet cell metaplasia, mucus hypersecretion, cystic fibrosis and AHR. May be involved in the regulation of mucus production and/or secretion by goblet cells. Involved in the regulation of tissue inflammation in the innate immune response. May play a role as a tumor suppressor. Induces MUC5AC. In Equus caballus (Horse), this protein is Calcium-activated chloride channel regulator 1 (CLCA1).